We begin with the raw amino-acid sequence, 282 residues long: Shikimate dehydrogenase (NADP(+)) (282 aa).

Residues 16–18 (SLS) and threonine 63 contribute to the shikimate site. Lysine 67 serves as the catalytic Proton acceptor. Shikimate contacts are provided by asparagine 88 and aspartate 103. NADP(+) contacts are provided by residues 128–132 (GAGGA) and glycine 243.

It belongs to the shikimate dehydrogenase family. As to quaternary structure, homodimer.

The catalysed reaction is shikimate + NADP(+) = 3-dehydroshikimate + NADPH + H(+). The protein operates within metabolic intermediate biosynthesis; chorismate biosynthesis; chorismate from D-erythrose 4-phosphate and phosphoenolpyruvate: step 4/7. Functionally, involved in the biosynthesis of the chorismate, which leads to the biosynthesis of aromatic amino acids. Catalyzes the reversible NADPH linked reduction of 3-dehydroshikimate (DHSA) to yield shikimate (SA). This chain is Shikimate dehydrogenase (NADP(+)), found in Xylella fastidiosa (strain 9a5c).